The chain runs to 116 residues: Putative anti-sigma factor antagonist BtrV (116 aa).

In terms of domain architecture, STAS spans 1–110; it reads MKLTMDKIDG…NSREAAAAAF (110 aa). Phosphoserine; by BtrW is present on Ser-55.

It belongs to the anti-sigma-factor antagonist family. As to quaternary structure, interacts with BtrW. Phosphorylated by BtrW. Dephosphorylated by BtrU.

Functionally, possible positive regulator of sigma-B activity. Non-phosphorylated BtrV binds to BtrW, preventing its association with an unknown partner(s) that might be sigma-B. When phosphorylated, releases BtrW, which is then free to complex with and inactivate its partner. Involved in type III secretion system (T3SS). This Bordetella bronchiseptica (strain ATCC BAA-588 / NCTC 13252 / RB50) (Alcaligenes bronchisepticus) protein is Putative anti-sigma factor antagonist BtrV (btrV).